Consider the following 890-residue polypeptide: Putative RNA-binding protein 15B (890 aa).

Positions 1–133 (MKRQSERDSS…AEPACPGSSA (133 aa)) are disordered. The segment covering 10–20 (SPSGRGSSSSA) has biased composition (low complexity). Composition is skewed to basic and acidic residues over residues 22–34 (RPRE…EAGG) and 66–78 (GHRD…DANH). The segment covering 86–99 (SGSGAGGGGRGGKA) has biased composition (gly residues). Phosphoserine occurs at positions 109 and 113. Residues 113–124 (SPLPPPPPPPGA) show a composition bias toward pro residues. Residues 139 to 219 (KTLLISSLSP…RPLKVEPVYL (81 aa)) enclose the RRM 1 domain. Residue Lys-213 forms a Glycyl lysine isopeptide (Lys-Gly) (interchain with G-Cter in SUMO2) linkage. Residues 219 to 253 (LRGGGGSSRRSSSSSAAASTPPPGPPAPADPLGYL) form a disordered region. Positions 226 to 237 (SRRSSSSSAAAS) are enriched in low complexity. Pro residues predominate over residues 238-247 (TPPPGPPAPA). Residues Ser-265 and Ser-267 each carry the phosphoserine modification. RRM domains follow at residues 337–414 (RNLF…YGKA) and 418–492 (TRLW…FAKA). Phosphothreonine is present on Thr-532. The disordered stretch occupies residues 547–705 (EGDWTSPSKS…KPLEEPKHET (159 aa)). Ser-552, Ser-556, and Ser-562 each carry phosphoserine. Basic and acidic residues-rich tracts occupy residues 573–616 (RSGE…ERSR) and 626–646 (RGSD…EGTK). The short motif at 593-597 (RRKRR) is the Nuclear localization signal element. The segment covering 647-657 (ESSSNSLSNSR) has biased composition (low complexity). Positions 671-703 (EAADSSHGKKARDSERNHRTTEAEPKPLEEPKH) are enriched in basic and acidic residues. A Glycyl lysine isopeptide (Lys-Gly) (interchain with G-Cter in SUMO2) cross-link involves residue Lys-702. Residues 711–889 (LSEYAQTLQL…HMVIVIVRDT (179 aa)) form the SPOC domain. An interaction with Epstein-Barr virus BMLF1 region spans residues 722–890 (WNGLLVLKNS…MVIVIVRDTA (169 aa)).

It belongs to the RRM Spen family. In terms of assembly, component of the WMM complex, a N6-methyltransferase complex composed of a catalytic subcomplex, named MAC, and of an associated subcomplex, named MACOM. The MAC subcomplex is composed of METTL3 and METTL14. The MACOM subcomplex is composed of WTAP, ZC3H13, CBLL1/HAKAI, VIRMA, and, in some cases of RBM15 (RBM15 or RBM15B). May interact with NCOR2. Interacts with NXF1, the interaction is required to promote mRNA export. As to quaternary structure, (Microbial infection) Interacts (via the SPOC domain) with Epstein-Barr virus BMLF1 (via the N-terminus); the interaction is direct. In terms of tissue distribution, ubiquitously expressed.

The protein resides in the nucleus. It is found in the nucleoplasm. The protein localises to the nucleus speckle. Its subcellular location is the nucleus envelope. In terms of biological role, RNA-binding protein that acts as a key regulator of N6-methyladenosine (m6A) methylation of RNAs, thereby regulating different processes, such as alternative splicing of mRNAs and X chromosome inactivation mediated by Xist RNA. Associated component of the WMM complex, a complex that mediates N6-methyladenosine (m6A) methylation of RNAs, a modification that plays a role in the efficiency of mRNA splicing and RNA processing. Plays a key role in m6A methylation, possibly by binding target RNAs and recruiting the WMM complex. Involved in random X inactivation mediated by Xist RNA: acts by binding Xist RNA and recruiting the WMM complex, which mediates m6A methylation, leading to target YTHDC1 reader on Xist RNA and promoting transcription repression activity of Xist. Functions in the regulation of alternative or illicit splicing, possibly by regulating m6A methylation. Inhibits pre-mRNA splicing. Also functions as a mRNA export factor by acting as a cofactor for the nuclear export receptor NXF1. The polypeptide is Putative RNA-binding protein 15B (Homo sapiens (Human)).